The primary structure comprises 111 residues: Large ribosomal subunit protein bL21 (111 aa).

The protein belongs to the bacterial ribosomal protein bL21 family. As to quaternary structure, part of the 50S ribosomal subunit. Contacts protein L20.

In terms of biological role, this protein binds to 23S rRNA in the presence of protein L20. The sequence is that of Large ribosomal subunit protein bL21 from Thermosynechococcus vestitus (strain NIES-2133 / IAM M-273 / BP-1).